The chain runs to 55 residues: MKIKLVRSVIGRPGNQVKTVQALGLRKIGDSREVSDTPAVRGMVKTVKHLLEVQE.

This sequence belongs to the universal ribosomal protein uL30 family. As to quaternary structure, part of the 50S ribosomal subunit.

In terms of biological role, binds the 5S and 23S rRNAs. This Deinococcus radiodurans (strain ATCC 13939 / DSM 20539 / JCM 16871 / CCUG 27074 / LMG 4051 / NBRC 15346 / NCIMB 9279 / VKM B-1422 / R1) protein is Large ribosomal subunit protein uL30.